The sequence spans 881 residues: Valine--tRNA ligase (881 aa).

Residues 49 to 59 (PNVTGKLHLGH) carry the 'HIGH' region motif. Residues 526–530 (KMSKS) carry the 'KMSKS' region motif. K529 contacts ATP. Residues 810 to 881 (LADLINLDEE…VRQRLADLEK (72 aa)) adopt a coiled-coil conformation.

Belongs to the class-I aminoacyl-tRNA synthetase family. ValS type 1 subfamily. In terms of assembly, monomer.

The protein localises to the cytoplasm. It catalyses the reaction tRNA(Val) + L-valine + ATP = L-valyl-tRNA(Val) + AMP + diphosphate. Its function is as follows. Catalyzes the attachment of valine to tRNA(Val). As ValRS can inadvertently accommodate and process structurally similar amino acids such as threonine, to avoid such errors, it has a 'posttransfer' editing activity that hydrolyzes mischarged Thr-tRNA(Val) in a tRNA-dependent manner. This Bacillus cereus (strain ATCC 10987 / NRS 248) protein is Valine--tRNA ligase.